We begin with the raw amino-acid sequence, 263 residues long: tRNA pseudouridine synthase A (263 aa).

The active-site Nucleophile is D51. Y109 contacts substrate.

Belongs to the tRNA pseudouridine synthase TruA family. In terms of assembly, homodimer.

The enzyme catalyses uridine(38/39/40) in tRNA = pseudouridine(38/39/40) in tRNA. Functionally, formation of pseudouridine at positions 38, 39 and 40 in the anticodon stem and loop of transfer RNAs. In Mannheimia succiniciproducens (strain KCTC 0769BP / MBEL55E), this protein is tRNA pseudouridine synthase A.